Reading from the N-terminus, the 249-residue chain is DNA repair protein RecO (249 aa).

This sequence belongs to the RecO family.

Functionally, involved in DNA repair and RecF pathway recombination. This chain is DNA repair protein RecO, found in Afipia carboxidovorans (strain ATCC 49405 / DSM 1227 / KCTC 32145 / OM5) (Oligotropha carboxidovorans).